The sequence spans 341 residues: Flagellar P-ring protein (341 aa).

The N-terminal stretch at 1 to 19 is a signal peptide; it reads MKQVFLWLIFVLAFHKLLA.

This sequence belongs to the FlgI family. In terms of assembly, the basal body constitutes a major portion of the flagellar organelle and consists of four rings (L,P,S, and M) mounted on a central rod.

It is found in the periplasm. The protein localises to the bacterial flagellum basal body. Assembles around the rod to form the L-ring and probably protects the motor/basal body from shearing forces during rotation. This Helicobacter acinonychis (strain Sheeba) protein is Flagellar P-ring protein.